The sequence spans 157 residues: Protein Smg homolog (157 aa).

This sequence belongs to the Smg family.

The protein is Protein Smg homolog of Pseudoalteromonas translucida (strain TAC 125).